A 364-amino-acid polypeptide reads, in one-letter code: tRNA-specific 2-thiouridylase MnmA 2 (364 aa).

ATP-binding positions include 10–17 (GMSGGVDS) and Met-36. The active-site Nucleophile is Cys-106. Cys-106 and Cys-204 are disulfide-bonded. Gly-130 serves as a coordination point for ATP. Positions 154–156 (KDQ) are interaction with tRNA. The active-site Cysteine persulfide intermediate is Cys-204. An interaction with tRNA region spans residues 310–311 (RY).

It belongs to the MnmA/TRMU family.

It is found in the cytoplasm. The enzyme catalyses S-sulfanyl-L-cysteinyl-[protein] + uridine(34) in tRNA + AH2 + ATP = 2-thiouridine(34) in tRNA + L-cysteinyl-[protein] + A + AMP + diphosphate + H(+). Functionally, catalyzes the 2-thiolation of uridine at the wobble position (U34) of tRNA, leading to the formation of s(2)U34. This Thermoanaerobacter pseudethanolicus (strain ATCC 33223 / 39E) (Clostridium thermohydrosulfuricum) protein is tRNA-specific 2-thiouridylase MnmA 2.